We begin with the raw amino-acid sequence, 209 residues long: Uracil phosphoribosyltransferase (209 aa).

Residues R79, R104, and 131 to 139 contribute to the 5-phospho-alpha-D-ribose 1-diphosphate site; that span reads DPLLATGNS. Uracil-binding positions include I194 and 199-201; that span reads GDA. D200 contacts 5-phospho-alpha-D-ribose 1-diphosphate.

The protein belongs to the UPRTase family. It depends on Mg(2+) as a cofactor.

The enzyme catalyses UMP + diphosphate = 5-phospho-alpha-D-ribose 1-diphosphate + uracil. It functions in the pathway pyrimidine metabolism; UMP biosynthesis via salvage pathway; UMP from uracil: step 1/1. Allosterically activated by GTP. Its function is as follows. Catalyzes the conversion of uracil and 5-phospho-alpha-D-ribose 1-diphosphate (PRPP) to UMP and diphosphate. The polypeptide is Uracil phosphoribosyltransferase (Rhodococcus opacus (strain B4)).